The sequence spans 128 residues: Con-Ins F2c (128 aa).

The N-terminal stretch at 1 to 24 (MTTSSYFLLVALGLLLYVCRSSFG) is a signal peptide. Disulfide bonds link Cys-29/Cys-104, Cys-41/Cys-107, Cys-53/Cys-120, and Cys-106/Cys-111. Positions 59 to 89 (LQGGTGKKRGRASLLRKRRAFLSMLKARAKR) are cleaved as a propeptide — c peptide. Glu-115 carries the post-translational modification 4-carboxyglutamate; partial. Ser-127 carries the serine amide modification.

Belongs to the insulin family. In terms of assembly, heterodimer of A and B chains; disulfide-linked. Expressed by the venom gland.

The protein localises to the secreted. In terms of biological role, this venom insulin facilitates prey capture by rapidly inducing hypoglycemic shock. Intraperitoneal injection of this peptide into zebrafish lowers blood glucose with the same potency than human insulin. In vivo, when applied to water, this peptide reduces overall locomotor activity of zebrafish larvae, observed as a significant decrease in the percentage of time spent swimming and movement frequency. The protein is Con-Ins F2c of Conus floridulus (Cone snail).